The sequence spans 212 residues: Glycerol-3-phosphate acyltransferase (212 aa).

Helical transmembrane passes span 3 to 23 (ILLA…VVVS), 51 to 71 (KAAI…VWLA), 78 to 98 (DVAV…PVFF), 115 to 135 (AVHP…AFFF), and 139 to 159 (SLAA…LFGT).

It belongs to the PlsY family. As to quaternary structure, probably interacts with PlsX.

It is found in the cell inner membrane. It catalyses the reaction an acyl phosphate + sn-glycerol 3-phosphate = a 1-acyl-sn-glycero-3-phosphate + phosphate. Its pathway is lipid metabolism; phospholipid metabolism. Catalyzes the transfer of an acyl group from acyl-phosphate (acyl-PO(4)) to glycerol-3-phosphate (G3P) to form lysophosphatidic acid (LPA). This enzyme utilizes acyl-phosphate as fatty acyl donor, but not acyl-CoA or acyl-ACP. This is Glycerol-3-phosphate acyltransferase from Burkholderia ambifaria (strain MC40-6).